The sequence spans 512 residues: Retinaldehyde dehydrogenase 3 (512 aa).

The disordered stretch occupies residues 1–22; that stretch reads MATTNGAVENGQPDGKPPALPR. Ala-2 is modified (N-acetylalanine). NAD(+)-binding positions include Lys-204, Glu-207, and 257–262; that span reads GSTEVG. The active-site Proton acceptor is Glu-280. Cys-314 acts as the Nucleophile in catalysis. Gln-361 and Glu-411 together coordinate NAD(+).

Belongs to the aldehyde dehydrogenase family. Homotetramer. Detected in embryonic head (at protein level). Ventral retina.

The protein localises to the cytoplasm. It catalyses the reaction retinal + NAD(+) + H2O = retinoate + NADH + 2 H(+). The catalysed reaction is all-trans-retinal + NAD(+) + H2O = all-trans-retinoate + NADH + 2 H(+). It carries out the reaction all-trans-13,14-dihydroretinal + NAD(+) + H2O = all-trans-13,14-dihydroretinoate + NADH + 2 H(+). The protein operates within cofactor metabolism; retinol metabolism. Catalyzes the NAD-dependent oxidation of aldehyde substrates, such as all-trans-retinal and all-trans-13,14-dihydroretinal, to their corresponding carboxylic acids, all-trans-retinoate and all-trans-13,14-dihydroretinoate, respectively. High specificity for all-trans-retinal as substrate, can also accept acetaldehyde as substrate in vitro but with lower affinity. Required for the biosynthesis of normal levels of retinoate in the embryonic ocular and nasal regions; a critical lipid in the embryonic development of the eye and the nasal region. This is Retinaldehyde dehydrogenase 3 (Aldh1a3) from Mus musculus (Mouse).